We begin with the raw amino-acid sequence, 84 residues long: Small ribosomal subunit protein uS17 (84 aa).

The protein belongs to the universal ribosomal protein uS17 family. Part of the 30S ribosomal subunit.

Functionally, one of the primary rRNA binding proteins, it binds specifically to the 5'-end of 16S ribosomal RNA. In Alkaliphilus oremlandii (strain OhILAs) (Clostridium oremlandii (strain OhILAs)), this protein is Small ribosomal subunit protein uS17.